The following is a 355-amino-acid chain: Sesquiterpene synthase MAJ_08936 (355 aa).

Mg(2+) contacts are provided by aspartate 91 and aspartate 96. The DDXXXD motif signature appears at 91-96 (DDLFVD). Arginine 184 provides a ligand contact to substrate. 3 residues coordinate Mg(2+): asparagine 230, serine 234, and glutamate 238.

The protein belongs to the terpene synthase family. The cofactor is Mg(2+).

The catalysed reaction is (2E,6E)-farnesyl diphosphate + H2O = (+)-corvol ether B + diphosphate. It carries out the reaction (2E,6E)-farnesyl diphosphate + H2O = (+)-corvol ether A + diphosphate. Functionally, terpene synthase that catalyzes the conversion of (2E,6E)-farnesyl diphosphate (FPP) into sesquiterpenes which are important for fungi-environment interactions. Produces a mixture consisting of 8 sesquiterpenes including corvol ethers A and B, as well as traces of epizonarene, gamma-cadinene, delta-cadinene, alpha-cadinene, alpha-cadinol, and an unidentified sesquiterpene. The major product is corvol ether A. The protein is Sesquiterpene synthase MAJ_08936 of Metarhizium majus (strain ARSEF 297).